Here is a 299-residue protein sequence, read N- to C-terminus: Lysine exporter LysO (299 aa).

Helical transmembrane passes span 1–21, 31–51, 58–78, 109–129, 131–151, 169–189, 207–227, and 277–297; these read MFSGLLIILVPLIVGYLIPLR, QLLSWMVYLILFFMGISLAFL, LLAILHYSAVSITVILLCNIA, LKLCGVVVIGFAIGLSGLAFL, HATEASEYTLILLLFLVGIQL, IVAVVVVVSSLIGGLINAFIL, SLSGILLTESFGPVIGSAAFF, and PAAIVHGFILSLLVPILIAFF.

This sequence belongs to the LysO family.

The protein localises to the cell inner membrane. Mediates export of lysine. The polypeptide is Lysine exporter LysO (Escherichia coli (strain K12)).